A 274-amino-acid chain; its full sequence is Chemotaxis protein methyltransferase 1 (274 aa).

The 274-residue stretch at 1–274 (MSAANADFEL…CSPGIIYRAK (274 aa)) folds into the CheR-type methyltransferase domain. Residues Asn72, Thr74, Arg78, Glu115, Asp144, 200–201 (NL), and 217–218 (RN) contribute to the S-adenosyl-L-methionine site.

It carries out the reaction L-glutamyl-[protein] + S-adenosyl-L-methionine = [protein]-L-glutamate 5-O-methyl ester + S-adenosyl-L-homocysteine. In terms of biological role, methylation of the membrane-bound methyl-accepting chemotaxis proteins (MCP) to form gamma-glutamyl methyl ester residues in MCP. This chain is Chemotaxis protein methyltransferase 1 (cheR1), found in Pseudomonas aeruginosa (strain ATCC 15692 / DSM 22644 / CIP 104116 / JCM 14847 / LMG 12228 / 1C / PRS 101 / PAO1).